Reading from the N-terminus, the 110-residue chain is Small ribosomal subunit protein bS16 (110 aa).

The interval 87–110 is disordered; that stretch reads ARNNPEKAVPRKERKAAAEAAAKK.

Belongs to the bacterial ribosomal protein bS16 family.

The protein is Small ribosomal subunit protein bS16 of Rhodopseudomonas palustris (strain HaA2).